Here is a 221-residue protein sequence, read N- to C-terminus: Immunoregulatory peptides (221 aa).

The N-terminal stretch at 1–19 (MNYLCLVVTLVAVAGAISG) is a signal peptide. The propeptide occupies 20–45 (EKFSDDNTGYQSTPSLRIRTTPGRRR). Residues 21–155 (KFSDDNTGYQ…PRTIGPPYTR (135 aa)) are disordered. The segment covering 25–34 (DNTGYQSTPS) has biased composition (polar residues). A compositionally biased stretch (low complexity) spans 48-69 (PRTIGPPYTRRTLRTTTDYSTT). Polar residues-rich tracts occupy residues 70 to 85 (VENG…STEK) and 123 to 133 (NGTTPAANSTE). A propeptide spanning residues 191–221 (EISWTFGPLYTWRTTKGYGTTLETTNATSTS) is cleaved from the precursor.

As to expression, salivary glands.

The protein resides in the secreted. Functionally, suppress host inflammatory response. Exerts significant anti-inflammatory functions, either by directly inhibiting host secretion of inflammatory factors such as tumor necrosis factor-alpha (TNF), monocyte chemotactic protein-1 (CCL2), and interferon-gamma (IFNG) or by indirectly increasing the secretion of immunosuppressant cytokine of interleukin-10 (IL10). Also potently scavenges free radical in vitro in a rapid manner. All tested concentrations of this peptide have little effect on the cell viability. In vivo, inhibits hind paw adjuvant-induced inflammation in mouse in a dose-dependent manner. Suppress host inflammatory response. Exerts significant anti-inflammatory functions, either by directly inhibiting host secretion of inflammatory factors such as tumor necrosis factor-alpha (TNF), monocyte chemotactic protein-1 (CCL2), and interferon-gamma (IFNG) or by indirectly increasing the secretion of immunosuppressant cytokine of interleukin-10 (IL10). Also potently scavenges free radical in vitro in a rapid manner. Low concentrations of this peptide have little effect on the cell viability, whereas high concentrations increase the cell viability by 10-20%. In vivo, inhibits hind paw adjuvant-induced inflammation in mouse in a dose-dependent manner. Its function is as follows. Not studied but probably similar to Hyalomin-B1. In Hyalomma asiaticum asiaticum (Tick), this protein is Immunoregulatory peptides.